We begin with the raw amino-acid sequence, 692 residues long: ABC transporter F family member 5 (692 aa).

Residues 64–95 form a disordered region; sequence EIESLFSKQPSQQDSDRKRNGKSSKNGASGIS. The span at 86-95 shows a compositional bias: polar residues; the sequence is SSKNGASGIS. ABC transporter domains lie at 98–356 and 425–640; these read VKLE…ETQN and VNVK…TKEL. ATP is bound by residues 130-137 and 457-464; these read GVNGAGKT and GPNGCGKS. The tract at residues 644–692 is disordered; sequence AELEEKAPKVKAKSKMSKAEKEARKKQKMQAFQQAKQKSKASKNSKRWN. Over residues 680 to 692 the composition is skewed to basic residues; it reads QKSKASKNSKRWN.

Belongs to the ABC transporter superfamily. ABCF family. EF3 (TC 3.A.1.121) subfamily.

This is ABC transporter F family member 5 (ABCF5) from Arabidopsis thaliana (Mouse-ear cress).